We begin with the raw amino-acid sequence, 1130 residues long: Putative protein tag-278 (1130 aa).

3 disordered regions span residues 1–92 (MSRS…DIDN), 104–129 (VARE…ELKR), and 974–1130 (NELI…AWKF). 2 coiled-coil regions span residues 121–779 (AGRE…EEIK) and 805–1061 (EERE…ARAK). Over residues 983 to 993 (RQTDESTSEPH) the composition is skewed to basic and acidic residues. The span at 999–1011 (SITSHGVFQNFVS) shows a compositional bias: polar residues. Composition is skewed to basic and acidic residues over residues 1013–1057 (MKDK…EKSP) and 1068–1081 (RLRD…KSDN). Low complexity predominate over residues 1082 to 1095 (LESTPSSSSRNLLS). Over residues 1116-1130 (TKKDSSSEKRPAWKF) the composition is skewed to basic and acidic residues.

The protein is Putative protein tag-278 (tag-278) of Caenorhabditis elegans.